The chain runs to 374 residues: Chaperone protein DnaJ (374 aa).

One can recognise a J domain in the interval 3 to 67 (DFYQILGVSR…ETRARYDQFG (65 aa)). Residues 99–118 (GQSSQGGRSQRRGPQQGDDL) form a disordered region. The span at 103–115 (QGGRSQRRGPQQG) shows a compositional bias: low complexity. The CR-type zinc-finger motif lies at 132–214 (GQQREINIPH…CGGNGVKQVR (83 aa)). Residues C145, C148, C162, C165, C188, C191, C202, and C205 each contribute to the Zn(2+) site. 4 CXXCXGXG motif repeats span residues 145-152 (CEVCRGTG), 162-169 (CTTCGGSG), 188-195 (CPTCNGVG), and 202-209 (CTSCGGNG).

Belongs to the DnaJ family. Homodimer. It depends on Zn(2+) as a cofactor.

The protein resides in the cytoplasm. Its function is as follows. Participates actively in the response to hyperosmotic and heat shock by preventing the aggregation of stress-denatured proteins and by disaggregating proteins, also in an autonomous, DnaK-independent fashion. Unfolded proteins bind initially to DnaJ; upon interaction with the DnaJ-bound protein, DnaK hydrolyzes its bound ATP, resulting in the formation of a stable complex. GrpE releases ADP from DnaK; ATP binding to DnaK triggers the release of the substrate protein, thus completing the reaction cycle. Several rounds of ATP-dependent interactions between DnaJ, DnaK and GrpE are required for fully efficient folding. Also involved, together with DnaK and GrpE, in the DNA replication of plasmids through activation of initiation proteins. This Prochlorococcus marinus subsp. pastoris (strain CCMP1986 / NIES-2087 / MED4) protein is Chaperone protein DnaJ.